We begin with the raw amino-acid sequence, 288 residues long: Glycine--tRNA ligase alpha subunit (288 aa).

This sequence belongs to the class-II aminoacyl-tRNA synthetase family. In terms of assembly, tetramer of two alpha and two beta subunits.

It localises to the cytoplasm. It catalyses the reaction tRNA(Gly) + glycine + ATP = glycyl-tRNA(Gly) + AMP + diphosphate. This is Glycine--tRNA ligase alpha subunit from Rickettsia peacockii (strain Rustic).